The chain runs to 196 residues: Putative NADH dehydrogenase/NAD(P)H nitroreductase Rpal_4764 (196 aa).

This sequence belongs to the nitroreductase family. HadB/RutE subfamily. The cofactor is FMN.

In Rhodopseudomonas palustris (strain TIE-1), this protein is Putative NADH dehydrogenase/NAD(P)H nitroreductase Rpal_4764.